A 77-amino-acid polypeptide reads, in one-letter code: Large ribosomal subunit protein uL29 (77 aa).

It belongs to the universal ribosomal protein uL29 family.

The polypeptide is Large ribosomal subunit protein uL29 (Methanopyrus kandleri (strain AV19 / DSM 6324 / JCM 9639 / NBRC 100938)).